The sequence spans 113 residues: uncharacterized protein (113 aa).

In terms of domain architecture, Cupin type-2 spans 41–88; sequence DWHHHPDSDELFIVLEGELLIDFKDKETAVLKANDSLLIPKGTVHRTR.

Belongs to the SchB/CurC family.

This is an uncharacterized protein from Bacillus subtilis (strain 168).